The sequence spans 261 residues: MASTPWISFTTDYGLADGFVAACHGVLARLAPTARVIDVTHLVPPGDVRRGAAVLAQTVPYLPAAVHVAVVDPGVGTARRAIALTAGNGLLVGPDNGLLLDAATALGGVDAAVELTNPDWLGARMSATFHGRDVFAPVAARLALGAPLADAGPAVEPGALVRLPTPLVQPETDGFTAEVLTVDHFGNVQLAATGALLESLPRSLRVAHRPAVHARTFDDAPPGGLLVHVDSAGLVAVAVNGGRAADLLAVTPGDQLRVTAG.

Adenosine is bound by residues aspartate 12, aspartate 72, and asparagine 187. The (R)-S-adenosyl-L-methionine site is built by asparagine 187, serine 231, and valine 239. Residue valine 239 participates in adenosine binding.

This sequence belongs to the SAM hydrolase / SAM-dependent halogenase family.

The catalysed reaction is (R)-S-adenosyl-L-methionine + H2O = adenosine + L-methionine + H(+). Its activity is regulated as follows. Activity is inhibited by chloride. Catalyzes the hydrolysis of S-adenosyl-L-methionine (SAM) into adenosine and L-methionine. Is likely stereoselective, specifically hydrolyzing (R)-S-adenosyl-L-methionine ((R)-SAM), the inactive form of the ubiquitous cofactor SAM, and not the active form of SAM, (S)-S-adenosyl-L-methionine. Probaly plays a role in preventing accumulation of (R)-S-adenosyl-L-methionine in cells; maintenance of (S)-S-denosyl-L-methionine homochirality is important for cellular health given that the (R)-form is largely inactive as a methyl donor and can function as an inhibitor of methyltransferases. Shows very slow iodinase activity in vitro. This Salinispora arenicola (strain CNS-205) protein is (R)-S-adenosyl-L-methionine hydrolase.